A 256-amino-acid polypeptide reads, in one-letter code: Geranylgeranylglyceryl phosphate synthase (256 aa).

The Mg(2+) site is built by aspartate 28 and serine 53. Residues 172–178 (YLEAGSG), 203–204 (GG), and 225–226 (GT) each bind sn-glycerol 1-phosphate.

Belongs to the GGGP/HepGP synthase family. Group II subfamily. Requires Mg(2+) as cofactor.

It localises to the cytoplasm. It catalyses the reaction sn-glycerol 1-phosphate + (2E,6E,10E)-geranylgeranyl diphosphate = sn-3-O-(geranylgeranyl)glycerol 1-phosphate + diphosphate. Its pathway is membrane lipid metabolism; glycerophospholipid metabolism. Functionally, prenyltransferase that catalyzes the transfer of the geranylgeranyl moiety of geranylgeranyl diphosphate (GGPP) to the C3 hydroxyl of sn-glycerol-1-phosphate (G1P). This reaction is the first ether-bond-formation step in the biosynthesis of archaeal membrane lipids. The chain is Geranylgeranylglyceryl phosphate synthase from Methanococcus maripaludis (strain C5 / ATCC BAA-1333).